An 834-amino-acid chain; its full sequence is Glycerol-3-phosphate acyltransferase (834 aa).

The short motif at 309–314 is the HXXXXD motif element; that stretch reads CHRSHI.

The protein belongs to the GPAT/DAPAT family.

The protein localises to the cell inner membrane. The enzyme catalyses sn-glycerol 3-phosphate + an acyl-CoA = a 1-acyl-sn-glycero-3-phosphate + CoA. It participates in phospholipid metabolism; CDP-diacylglycerol biosynthesis; CDP-diacylglycerol from sn-glycerol 3-phosphate: step 1/3. This chain is Glycerol-3-phosphate acyltransferase, found in Pseudomonas fluorescens (strain ATCC BAA-477 / NRRL B-23932 / Pf-5).